The sequence spans 378 residues: Probable S-(hydroxymethyl)glutathione dehydrogenase 1 (378 aa).

Cysteine 47 contributes to the Zn(2+) binding site. Residue histidine 48 participates in NAD(+) binding. Residues histidine 69, glutamate 70, cysteine 99, cysteine 102, cysteine 105, cysteine 113, and cysteine 176 each coordinate Zn(2+). Residues 201–206 (GCGCVG), aspartate 225, 293–295 (IGV), and 318–320 (SAF) each bind NAD(+).

It belongs to the zinc-containing alcohol dehydrogenase family. Class-III subfamily. Requires Zn(2+) as cofactor.

It catalyses the reaction a primary alcohol + NAD(+) = an aldehyde + NADH + H(+). It carries out the reaction a secondary alcohol + NAD(+) = a ketone + NADH + H(+). The enzyme catalyses S-(hydroxymethyl)glutathione + NADP(+) = S-formylglutathione + NADPH + H(+). The catalysed reaction is S-(hydroxymethyl)glutathione + NAD(+) = S-formylglutathione + NADH + H(+). It catalyses the reaction S-nitrosoglutathione + NADH + H(+) = S-(hydroxysulfenamide)glutathione + NAD(+). In terms of biological role, oxidizes long-chain alcohols and, in the presence of glutathione, is able to oxidize formaldehyde. Also acts as a S-nitroso-glutathione reductase by catalyzing the NADH-dependent reduction of S-nitrosoglutathione, thereby regulating protein S-nitrosylation. The sequence is that of Probable S-(hydroxymethyl)glutathione dehydrogenase 1 from Schizosaccharomyces pombe (strain 972 / ATCC 24843) (Fission yeast).